The following is a 731-amino-acid chain: MMLVFLLIRRQWRSASVRREEVIRLIALATEESYLAEEVRPATVDYGGDSVSDVYRCAVCLYPTTTRCSQCKSVRYCSSKCQILHWRRGHKEECRSPDYDEEKEEYVQSDYDAKESNVDFPSRGTAYESSSNVSVDVACDMSTSRPSIHKVQPRSEAVDFTTSLNIKDNLYETRPLSRKKSRNRTDKVESASNYSKGKTDAKLRKLGNQNSRRSGDSANMSISDQFLSVGFEEEMNALKHERITSEPSSASAAMSSSSTLLLPSKANSKPKVSQASSSGLKTSVQKVVQHFRPPQSSKKSQPSSSIDEMSFSYELFVKLYCDRVELQPFGLVNLGNSCYANAVLQCLAFTRPLISYLIRGLHSKTCRKKSWCFVCEFEHLILKARGGESPLSPIKILSKLQKIGKHLGPGKEEDAHEFLRCAVDTMQSVFLKEAPAAGPFAEETTLVGLTFGGYLHSKIKCMACLHKSERPELMMDLTVEIDGDIGSLEEALAQFTAYEVLDGENRYFCGRCKSYQKAKKKLMILEGPNILTVVLKRFQSDNFGKLSKPIHFPELLDISPYMSDPNHGDHPVYSLYAVVVHLDAMSTLFSGHYVCYIKTLDGDWFKIDDSNVFPVQLETVLLEGAYMLLYARDSPRPVSKNGGRKSKQRRNLAAIPSRKGNKKQRDGDNNSLLPRVDWSSGSLSSMFSSSDTTSSCSTKDSSGIENLSDYLFGGVEPVWKWDRHNKSQTFD.

Zn(2+)-binding residues include C57, C60, C68, C71, C77, C81, H90, and C94. An MYND-type zinc finger spans residues 57–94 (CAVCLYPTTTRCSQCKSVRYCSSKCQILHWRRGHKEEC). 2 disordered regions span residues 171–219 (YETR…DSAN) and 262–281 (LPSK…SGLK). Composition is skewed to polar residues over residues 207 to 219 (GNQN…DSAN) and 265 to 281 (KANS…SGLK). Residues 329–633 (FGLVNLGNSC…GAYMLLYARD (305 aa)) form the USP domain. The active-site Nucleophile is the C338. H592 serves as the catalytic Proton acceptor. Residues 637-702 (PVSKNGGRKS…TSSCSTKDSS (66 aa)) are disordered. Low complexity predominate over residues 677 to 701 (DWSSGSLSSMFSSSDTTSSCSTKDS).

The protein belongs to the peptidase C19 family.

The catalysed reaction is Thiol-dependent hydrolysis of ester, thioester, amide, peptide and isopeptide bonds formed by the C-terminal Gly of ubiquitin (a 76-residue protein attached to proteins as an intracellular targeting signal).. Functionally, recognizes and hydrolyzes the peptide bond at the C-terminal Gly of ubiquitin. Involved in the processing of poly-ubiquitin precursors as well as that of ubiquitinated proteins. This is Ubiquitin carboxyl-terminal hydrolase 17 (UBP17) from Arabidopsis thaliana (Mouse-ear cress).